Consider the following 483-residue polypeptide: Lipoamide acyltransferase component of branched-chain alpha-keto acid dehydrogenase complex, mitochondrial (483 aa).

The transit peptide at 1-75 (MIARRIWRSH…AMATDSNSGL (75 aa)) directs the protein to the mitochondrion. Positions 76-150 (IDVPLAQTGE…KVGETLVRLA (75 aa)) constitute a Lipoyl-binding domain. K116 bears the N6-lipoyllysine mark. The Peripheral subunit-binding (PSBD) domain maps to 183–220 (LSTPAVRNLAKDLGIDINVITGTGKDGRVLKEDVLRFS). Catalysis depends on residues H453 and D457.

It belongs to the 2-oxoacid dehydrogenase family. Forms a 24-polypeptide structural core with octahedral symmetry. Requires (R)-lipoate as cofactor. In terms of tissue distribution, expressed in the non-photosynthetic organs such as siliques, flowers and roots.

The protein resides in the mitochondrion matrix. It catalyses the reaction N(6)-[(R)-dihydrolipoyl]-L-lysyl-[protein] + 2-methylpropanoyl-CoA = N(6)-[(R)-S(8)-2-methylpropanoyldihydrolipoyl]-L-lysyl-[protein] + CoA. In terms of biological role, the branched-chain alpha-keto dehydrogenase complex catalyzes the overall conversion of alpha-keto acids to acyl-CoA and CO(2). It contains multiple copies of three enzymatic components: branched-chain alpha-keto acid decarboxylase (E1), lipoamide acyltransferase (E2) and lipoamide dehydrogenase (E3). Within this complex, the catalytic function of this enzyme is to accept, and to transfer to coenzyme A, acyl groups that are generated by the branched-chain alpha-keto acid decarboxylase component. Required during sugar starvation and acts under the control of a sugar-sensing mechanism involving Ser/Thr kinases and phosphatases. In Arabidopsis thaliana (Mouse-ear cress), this protein is Lipoamide acyltransferase component of branched-chain alpha-keto acid dehydrogenase complex, mitochondrial (BCE2).